The sequence spans 432 residues: Adenylosuccinate synthetase (432 aa).

Residues 13-19 (GDEGKGK) and 41-43 (GHT) each bind GTP. Catalysis depends on D14, which acts as the Proton acceptor. Mg(2+)-binding residues include D14 and G41. IMP is bound by residues 14–17 (DEGK), 39–42 (NAGH), T130, R144, Q225, T240, and R304. Residue H42 is the Proton donor of the active site. A substrate-binding site is contributed by 300–306 (ATTGRRR). Residues R306, 332–334 (KLD), and 415–417 (STG) each bind GTP.

The protein belongs to the adenylosuccinate synthetase family. Homodimer. Requires Mg(2+) as cofactor.

Its subcellular location is the cytoplasm. The catalysed reaction is IMP + L-aspartate + GTP = N(6)-(1,2-dicarboxyethyl)-AMP + GDP + phosphate + 2 H(+). The protein operates within purine metabolism; AMP biosynthesis via de novo pathway; AMP from IMP: step 1/2. Functionally, plays an important role in the de novo pathway of purine nucleotide biosynthesis. Catalyzes the first committed step in the biosynthesis of AMP from IMP. This Salmonella arizonae (strain ATCC BAA-731 / CDC346-86 / RSK2980) protein is Adenylosuccinate synthetase.